The chain runs to 256 residues: MLRIADKTFDSHLFTGTGKFASSQLMVEAIRASGSQLVTLAMKRVDLRQHNDAILEPLIAAGVTLLPNTSGAKTAEEAIFAAHLAREALGTNWLKLEIHPDARWLLPDPIETLKAAETLVQQGFVVLPYCGADPVLCKRLEEVGCAAVMPLGAPIGSNQGLETRAMLEIIIQQATVPVVVDAGIGVPSHAAQALEMGADAVLVNTAIAVADDPVNMAKAFRLAVEAGLLARQSGPGSRSHFAHATSPLAGFLEASA.

The Schiff-base intermediate with DXP role is filled by K95. Residues G156, 182–183 (AG), and 204–205 (NT) each bind 1-deoxy-D-xylulose 5-phosphate.

Belongs to the ThiG family. As to quaternary structure, homotetramer. Forms heterodimers with either ThiH or ThiS.

The protein resides in the cytoplasm. It catalyses the reaction [ThiS sulfur-carrier protein]-C-terminal-Gly-aminoethanethioate + 2-iminoacetate + 1-deoxy-D-xylulose 5-phosphate = [ThiS sulfur-carrier protein]-C-terminal Gly-Gly + 2-[(2R,5Z)-2-carboxy-4-methylthiazol-5(2H)-ylidene]ethyl phosphate + 2 H2O + H(+). It functions in the pathway cofactor biosynthesis; thiamine diphosphate biosynthesis. Its function is as follows. Catalyzes the rearrangement of 1-deoxy-D-xylulose 5-phosphate (DXP) to produce the thiazole phosphate moiety of thiamine. Sulfur is provided by the thiocarboxylate moiety of the carrier protein ThiS. In vitro, sulfur can be provided by H(2)S. This is Thiazole synthase from Escherichia coli O8 (strain IAI1).